The following is a 435-amino-acid chain: NAD-specific glutamate dehydrogenase A (435 aa).

Residues 1–28 form a disordered region; the sequence is MTMASKSDSTHDESGDEAADSTEPESAL. Residues 14 to 23 show a composition bias toward acidic residues; the sequence is SGDEAADSTE. Lys-126 is a catalytic residue.

The protein belongs to the Glu/Leu/Phe/Val dehydrogenases family. As to quaternary structure, homohexamer. In terms of processing, the N-terminus is blocked.

It carries out the reaction L-glutamate + NAD(+) + H2O = 2-oxoglutarate + NH4(+) + NADH + H(+). Inhibited by ethanol, acetone, acetonitrile and 2-propanol (65 to 70% inhibition) and to a lesser extent by methanol and dimethyl formamide (26 and 49 % inhibition respectively). No effect of glycerol or DMSO. This chain is NAD-specific glutamate dehydrogenase A (gdhX), found in Halobacterium salinarum (Halobacterium halobium).